A 445-amino-acid chain; its full sequence is Inner membrane metabolite transport protein YgcS (445 aa).

The Cytoplasmic segment spans residues 1-22 (MNTSPVRMDDLPLNRFHCRIAA). A helical membrane pass occupies residues 23-43 (LTFGAHLTDGYVLGVIGYAII). The Periplasmic segment spans residues 44–56 (QLTPAMQLTPFMA). A helical transmembrane segment spans residues 57-77 (GMIGGSALLGLFLGSLVLGWI). Over 78 to 85 (SDHIGRQK) the chain is Cytoplasmic. A helical transmembrane segment spans residues 86–106 (IFTFSFLLITLASFLQFFATT). Residues 107 to 114 (PEHLIGLR) are Periplasmic-facing. A helical transmembrane segment spans residues 115–135 (ILIGIGLGGDYSVGHTLLAEF). Topologically, residues 136-142 (SPRRHRG) are cytoplasmic. Residues 143–163 (ILLGAFSVVWTVGYVLASIAG) form a helical membrane-spanning segment. Topologically, residues 164–175 (HHFISENPEAWR) are periplasmic. Residues 176 to 196 (WLLASAALPALLITLLRWGTP) form a helical membrane-spanning segment. At 197–253 (ESPRWLLRQGRFAEAHAIVHRYFGPHVLLGDEVVTATHKHIKTLFSSRYWRRTAFNS) the chain is on the cytoplasmic side. A helical transmembrane segment spans residues 254-274 (VFFVCLVIPWFVIYTWLPTIA). The Periplasmic segment spans residues 275–286 (QTIGLEDALTAS). The chain crosses the membrane as a helical span at residues 287-307 (LMLNALLIVGALLGLVLTHLL). Over 308–311 (AHRK) the chain is Cytoplasmic. A helical membrane pass occupies residues 312–332 (FLLGSFLLLAATLVVMACLPS). Over 333–337 (GSSLT) the chain is Periplasmic. The helical transmembrane segment at 338–358 (LLLFVLFSTTISAVSNLVGIL) threads the bilayer. The Cytoplasmic portion of the chain corresponds to 359 to 369 (PAESFPTDIRS). The chain crosses the membrane as a helical span at residues 370 to 390 (LGVGFATAMSRLGAAVSTGLL). Over 391–400 (PWVLAQWGMQ) the chain is Periplasmic. The chain crosses the membrane as a helical span at residues 401-421 (VTLLLLATVLLVGFVVTWLWA). Topologically, residues 422 to 445 (PETKALPLVAAGNVGGANEHSVSV) are cytoplasmic.

This sequence belongs to the major facilitator superfamily. Sugar transporter (TC 2.A.1.1) family.

It is found in the cell inner membrane. The polypeptide is Inner membrane metabolite transport protein YgcS (ygcS) (Escherichia coli (strain K12)).